The sequence spans 247 residues: Pyridoxine 5'-phosphate synthase (247 aa).

Position 9 (Asn9) interacts with 3-amino-2-oxopropyl phosphate. Residue 11–12 (DH) coordinates 1-deoxy-D-xylulose 5-phosphate. Arg20 lines the 3-amino-2-oxopropyl phosphate pocket. Catalysis depends on His45, which acts as the Proton acceptor. Residues Arg47 and His52 each contribute to the 1-deoxy-D-xylulose 5-phosphate site. The Proton acceptor role is filled by Glu72. Residue Thr102 coordinates 1-deoxy-D-xylulose 5-phosphate. His193 (proton donor) is an active-site residue. Residues Gly194 and 215–216 (GH) each bind 3-amino-2-oxopropyl phosphate.

This sequence belongs to the PNP synthase family. In terms of assembly, homooctamer; tetramer of dimers.

The protein localises to the cytoplasm. The catalysed reaction is 3-amino-2-oxopropyl phosphate + 1-deoxy-D-xylulose 5-phosphate = pyridoxine 5'-phosphate + phosphate + 2 H2O + H(+). Its pathway is cofactor biosynthesis; pyridoxine 5'-phosphate biosynthesis; pyridoxine 5'-phosphate from D-erythrose 4-phosphate: step 5/5. Catalyzes the complicated ring closure reaction between the two acyclic compounds 1-deoxy-D-xylulose-5-phosphate (DXP) and 3-amino-2-oxopropyl phosphate (1-amino-acetone-3-phosphate or AAP) to form pyridoxine 5'-phosphate (PNP) and inorganic phosphate. The protein is Pyridoxine 5'-phosphate synthase of Blochmanniella floridana.